The primary structure comprises 554 residues: Solute carrier family 22 member 1 (554 aa).

The Cytoplasmic segment spans residues 1–24 (MPSVDDVLEQVGEFGWFQKQAFLN). Residues 25–45 (LCLTSVAFAPIYVGIVFLGFT) form a helical membrane-spanning segment. Residues 46–234 (PDHRCRSPGV…EFVGLGYRKT (189 aa)) lie on the Extracellular side of the membrane. The N-linked (GlcNAc...) asparagine glycan is linked to asparagine 71. The helical transmembrane segment at 235-255 (VAILYQTAFSVGLVLLSGLAY) threads the bilayer. The Cytoplasmic segment spans residues 256–261 (AVPHWR). The helical transmembrane segment at 262-282 (SLQLAVSLPIFLLLLCYWFVP) threads the bilayer. Positions 282 to 286 (PESPR) match the Proline-rich sequence motif. At 283-347 (ESPRWLLSQK…FRTQNLRKYT (65 aa)) the chain is on the extracellular side. Serine 333 is subject to Phosphoserine. Residues 348–368 (FILMYLWFTSSVLYQGLIMHV) form a helical membrane-spanning segment. Topologically, residues 369 to 376 (GATGGSLY) are cytoplasmic. Residues 377-397 (LDFLYSALVEFPAAFVILLII) traverse the membrane as a helical segment. The Extracellular portion of the chain corresponds to 398 to 402 (DRFGR). Residues 403-423 (LYLLAGSNLLAGAACFFMIFI) form a helical membrane-spanning segment. The Cytoplasmic portion of the chain corresponds to 424 to 431 (SHDLHWLS). Residues 432 to 452 (IVAACIGRMGITIVFQMVCLV) traverse the membrane as a helical segment. Residues 453–464 (SAELYPTFIRNL) lie on the Extracellular side of the membrane. Residues 465 to 485 (GVMVCSSLCDLGGVVAPFLVF) form a helical membrane-spanning segment. The Cytoplasmic portion of the chain corresponds to 486–492 (RLTEVWR). Residues 493–513 (GLPLVLFAALGLVAGGMSLLL) form a helical membrane-spanning segment. Residues 514–554 (PETKGVALPETIEEVERLGRKAKPRDNMIYLQVKMPEPAGL) are Extracellular-facing.

The protein belongs to the major facilitator (TC 2.A.1) superfamily. Organic cation transporter (TC 2.A.1.19) family. Phosphorylated.

It is found in the basolateral cell membrane. The protein resides in the apical cell membrane. Its subcellular location is the lateral cell membrane. The protein localises to the basal cell membrane. It localises to the cell membrane. It carries out the reaction 1-methylnicotinamide(out) = 1-methylnicotinamide(in). It catalyses the reaction dopamine(out) = dopamine(in). The enzyme catalyses serotonin(out) = serotonin(in). The catalysed reaction is (R)-adrenaline(out) = (R)-adrenaline(in). It carries out the reaction (R)-noradrenaline(out) = (R)-noradrenaline(in). It catalyses the reaction histamine(out) = histamine(in). The enzyme catalyses guanidine(out) = guanidine(in). The catalysed reaction is choline(out) = choline(in). It carries out the reaction acetylcholine(in) = acetylcholine(out). It catalyses the reaction thiamine(in) = thiamine(out). The enzyme catalyses spermidine(in) = spermidine(out). The catalysed reaction is agmatine(out) = agmatine(in). It carries out the reaction putrescine(out) = putrescine(in). It catalyses the reaction (R)-carnitine(in) = (R)-carnitine(out). The enzyme catalyses O-isobutanoyl-(R)-carnitine(in) = O-isobutanoyl-(R)-carnitine(out). The catalysed reaction is O-acetyl-(R)-carnitine(in) = O-acetyl-(R)-carnitine(out). It carries out the reaction O-3-hydroxybutanoyl-(R)-carnitine(in) = O-3-hydroxybutanoyl-(R)-carnitine(out). It catalyses the reaction O-propanoyl-(R)-carnitine(in) = O-propanoyl-(R)-carnitine(out). The enzyme catalyses O-butanoyl-(R)-carnitine(in) = O-butanoyl-(R)-carnitine(out). The catalysed reaction is O-2-methylbutanoyl-(R)-carnitine(in) = O-2-methylbutanoyl-(R)-carnitine(out). It carries out the reaction O-3-methylbutanoyl-(R)-carnitine(in) = O-3-methylbutanoyl-(R)-carnitine(out). It catalyses the reaction O-hexanoyl-(R)-carnitine(in) = O-hexanoyl-(R)-carnitine(out). The enzyme catalyses L-histidyl-L-proline diketopiperazine(in) = L-histidyl-L-proline diketopiperazine(out). The catalysed reaction is (R)-salsolinol(in) = (R)-salsolinol(out). It carries out the reaction prostaglandin F2alpha(out) = prostaglandin F2alpha(in). It catalyses the reaction prostaglandin E2(out) = prostaglandin E2(in). Phosphorylation of the transporter leads to changes in its substrate affinity, resulting in a regulation of the transport activity. In contrast with rat ortholog, ASP uptake is inhibited by protein kinase A (PKA) and C (PKC) activation. ASP uptake is also endogenously activated by calmodulin, the calmodulin-dependent kinase II and LCK tyrosine kinase. Inhibited by cGMP, most likely through a cGMP-binding protein that interacts with OCT1. In terms of biological role, electrogenic voltage-dependent transporter that mediates the transport of a variety of organic cations such as endogenous bioactive amines, cationic drugs and xenobiotics. Functions as a pH- and Na(+)-independent, bidirectional transporter. Cation cellular uptake or release is driven by the electrochemical potential (i.e. membrane potential and concentration gradient) and substrate selectivity. Hydrophobicity is a major requirement for recognition in polyvalent substrates and inhibitors. Primarily expressed in the basolateral membrane of hepatocytes and proximal tubules and involved in the uptake and disposition of cationic compounds from the blood by hepatic and renal clearance. Most likely functions as an uptake carrier in enterocytes contributing to the intestinal elimination of organic cations from the systemic circulation. Transports endogenous monoamines such as N-1-methylnicotinamide (NMN), guanidine, neurotransmitters dopamine, serotonin, noradrenaline, adrenaline and histamine, and quaternary ammonium compound such as choline. Also transports natural polyamines such as spermidine, agmatine and putrescine at low affinity, but relatively high turnover. Involved in the hepatic and intestinal uptake of the vitamin B1/thiamine, hence regulating hepatic lipid and energy metabolism. Contributes to the influx and efflux of fatty acid carriers carnitines and acylcarnitines across the basolateral membrane of hepatocytes, from the liver to the systemic circulation and inversely and may be involved in regulating the systemic availability of hepatic acylcarnitines. Also capable of transporting non-amine endogenous compounds such as prostaglandin E2 (PGE2) and prostaglandin F2-alpha (PGF2-alpha). May contribute to the transport of cationic compounds in testes across the blood-testis-barrier. Also mediates the uptake of xenobiotics tributylmethylammonium (TBuMA), quinidine, N-methyl-quinine (NMQ), N-methyl-quinidine (NMQD) N-(4,4-azo-n-pentyl)-quinuclidine (APQ), azidoprocainamide methoiodide (AMP), N-(4,4-azo-n-pentyl)-21-deoxyajmalinium (APDA) and 4-(4-(dimethylamino)styryl)-N-methylpyridinium (ASP). The chain is Solute carrier family 22 member 1 (SLC22A1) from Sus scrofa (Pig).